Reading from the N-terminus, the 260-residue chain is Snake venom serine protease homolog 2 (260 aa).

The N-terminal stretch at 1–18 (MVLIRVLANLLVLQLSYA) is a signal peptide. Residues 19–24 (QKSSEL) constitute a propeptide that is removed on maturation. A Peptidase S1 domain is found at 25-251 (VIGGDECNIN…YTDWIQSIIA (227 aa)). 6 disulfides stabilise this stretch: cysteine 31–cysteine 165, cysteine 52–cysteine 68, cysteine 100–cysteine 258, cysteine 144–cysteine 212, cysteine 176–cysteine 191, and cysteine 202–cysteine 227. An N-linked (GlcNAc...) asparagine glycan is attached at asparagine 123. Residue asparagine 253 is glycosylated (N-linked (GlcNAc...) asparagine).

Belongs to the peptidase S1 family. Snake venom subfamily. Expressed by the venom gland.

The protein localises to the secreted. Functionally, snake venom serine protease homolog that may act in the hemostasis system of the prey. This Macrovipera lebetinus (Levantine viper) protein is Snake venom serine protease homolog 2.